A 243-amino-acid chain; its full sequence is Uridylate kinase (243 aa).

15 to 18 provides a ligand contact to ATP; it reads KISG. G57 contacts UMP. ATP is bound by residues G58 and R62. UMP-binding positions include D77 and 138 to 145; that span reads TGNPFFTT. T165, F171, and D174 together coordinate ATP.

The protein belongs to the UMP kinase family. Homohexamer.

It is found in the cytoplasm. The catalysed reaction is UMP + ATP = UDP + ADP. The protein operates within pyrimidine metabolism; CTP biosynthesis via de novo pathway; UDP from UMP (UMPK route): step 1/1. Its activity is regulated as follows. Inhibited by UTP. Catalyzes the reversible phosphorylation of UMP to UDP. This Blochmanniella floridana protein is Uridylate kinase.